An 85-amino-acid polypeptide reads, in one-letter code: U4-theraphotoxin-Hhn1d (85 aa).

Residues 1–22 (MKVTLIAILTCAAVLVLHTTAA) form the signal peptide. Positions 23 to 48 (EELEAESQLMEVGMPDTELAAVDEER) are excised as a propeptide. Cystine bridges form between Cys52/Cys66, Cys56/Cys77, and Cys71/Cys82.

It belongs to the neurotoxin 12 (Hwtx-2) family. 02 (Hwtx-2) subfamily. As to expression, expressed by the venom gland.

Its subcellular location is the secreted. Postsynaptic neurotoxin. The sequence is that of U4-theraphotoxin-Hhn1d from Cyriopagopus hainanus (Chinese bird spider).